Here is a 248-residue protein sequence, read N- to C-terminus: 3-deoxy-manno-octulosonate cytidylyltransferase (248 aa).

Belongs to the KdsB family.

The protein resides in the cytoplasm. The enzyme catalyses 3-deoxy-alpha-D-manno-oct-2-ulosonate + CTP = CMP-3-deoxy-beta-D-manno-octulosonate + diphosphate. It participates in nucleotide-sugar biosynthesis; CMP-3-deoxy-D-manno-octulosonate biosynthesis; CMP-3-deoxy-D-manno-octulosonate from 3-deoxy-D-manno-octulosonate and CTP: step 1/1. Its pathway is bacterial outer membrane biogenesis; lipopolysaccharide biosynthesis. Its function is as follows. Activates KDO (a required 8-carbon sugar) for incorporation into bacterial lipopolysaccharide in Gram-negative bacteria. The chain is 3-deoxy-manno-octulosonate cytidylyltransferase from Photobacterium profundum (strain SS9).